A 124-amino-acid chain; its full sequence is Large ribosomal subunit protein bL12 (124 aa).

It belongs to the bacterial ribosomal protein bL12 family. As to quaternary structure, homodimer. Part of the ribosomal stalk of the 50S ribosomal subunit. Forms a multimeric L10(L12)X complex, where L10 forms an elongated spine to which 2 to 4 L12 dimers bind in a sequential fashion. Binds GTP-bound translation factors.

Its function is as follows. Forms part of the ribosomal stalk which helps the ribosome interact with GTP-bound translation factors. Is thus essential for accurate translation. The polypeptide is Large ribosomal subunit protein bL12 (Jannaschia sp. (strain CCS1)).